The primary structure comprises 605 residues: Glucose oxidase (605 aa).

An N-terminal signal peptide occupies residues 1 to 16 (MKTILSSSLVVSMAAA). Residues Leu51 and Thr52 each coordinate FAD. Asn65 is a glycosylation site (N-linked (GlcNAc...) asparagine). Position 72 (Glu72) interacts with FAD. N-linked (GlcNAc...) asparagine glycosylation occurs at Asn111. The FAD site is built by Ser125, Asn129, Gly130, and Thr132. An intrachain disulfide couples Cys186 to Cys228. An N-linked (GlcNAc...) asparagine glycan is attached at Asn190. Val272 is a binding site for FAD. N-linked (GlcNAc...) asparagine glycans are attached at residues Asn280, Asn377, Asn410, and Asn495. His538 serves as the catalytic Proton acceptor. Positions 559 and 560 each coordinate O2. Residues Gly571 and Met583 each contribute to the FAD site.

Belongs to the GMC oxidoreductase family. As to quaternary structure, homodimer. FAD is required as a cofactor.

The protein resides in the secreted. Its subcellular location is the cell wall. The protein localises to the cytoplasm. It is found in the extracellular space. It localises to the extracellular matrix. It catalyses the reaction beta-D-glucose + O2 = D-glucono-1,5-lactone + H2O2. In terms of biological role, glucose oxidase catalyzes the oxidation of beta-D-glucose to D-glucono-delta-lactone and hydrogen peroxide in the presence of molecular oxygen. Acts as a critical factor modulating pathogenicity by controlling transcription of genes important for fungal secondary metabolism and infection such as those coding for enzymes involved in degradation of the host cell wall. The chain is Glucose oxidase from Aspergillus carbonarius (strain ITEM 5010).